We begin with the raw amino-acid sequence, 213 residues long: Lactobacillus shifted protein (213 aa).

Residues 28 to 38 (PRFTENAMQPN) show a composition bias toward polar residues. 2 disordered regions span residues 28 to 56 (PRFT…DATP) and 182 to 213 (PTSS…YEQR).

In Emericella nidulans (strain FGSC A4 / ATCC 38163 / CBS 112.46 / NRRL 194 / M139) (Aspergillus nidulans), this protein is Lactobacillus shifted protein (lbsA).